Consider the following 145-residue polypeptide: Bacilliredoxin BH2759 (145 aa).

It belongs to the bacilliredoxin family.

The sequence is that of Bacilliredoxin BH2759 from Halalkalibacterium halodurans (strain ATCC BAA-125 / DSM 18197 / FERM 7344 / JCM 9153 / C-125) (Bacillus halodurans).